Here is a 276-residue protein sequence, read N- to C-terminus: Diaminopimelate epimerase (276 aa).

The substrate site is built by asparagine 13, glutamine 46, and asparagine 66. Cysteine 75 acts as the Proton donor in catalysis. Residues 76 to 77, asparagine 159, asparagine 192, and 210 to 211 each bind substrate; these read GN and ER. The active-site Proton acceptor is the cysteine 219. A substrate-binding site is contributed by 220–221; that stretch reads GT.

Belongs to the diaminopimelate epimerase family. Homodimer.

The protein resides in the cytoplasm. The catalysed reaction is (2S,6S)-2,6-diaminopimelate = meso-2,6-diaminopimelate. It participates in amino-acid biosynthesis; L-lysine biosynthesis via DAP pathway; DL-2,6-diaminopimelate from LL-2,6-diaminopimelate: step 1/1. In terms of biological role, catalyzes the stereoinversion of LL-2,6-diaminopimelate (L,L-DAP) to meso-diaminopimelate (meso-DAP), a precursor of L-lysine and an essential component of the bacterial peptidoglycan. The chain is Diaminopimelate epimerase from Pseudomonas entomophila (strain L48).